The chain runs to 364 residues: DNA polymerase IV (364 aa).

Residues 6–194 enclose the UmuC domain; the sequence is VFHIDFDYFY…LKIRDIPGIG (189 aa). Mg(2+) is bound by residues D10 and D111. Residue E112 is part of the active site.

The protein belongs to the DNA polymerase type-Y family. Monomer. Mg(2+) serves as cofactor.

Its subcellular location is the cytoplasm. The catalysed reaction is DNA(n) + a 2'-deoxyribonucleoside 5'-triphosphate = DNA(n+1) + diphosphate. Poorly processive, error-prone DNA polymerase involved in untargeted mutagenesis. Copies undamaged DNA at stalled replication forks, which arise in vivo from mismatched or misaligned primer ends. These misaligned primers can be extended by PolIV. Exhibits no 3'-5' exonuclease (proofreading) activity. May be involved in translesional synthesis. The chain is DNA polymerase IV from Nitrosopumilus maritimus (strain SCM1).